Consider the following 167-residue polypeptide: Small ribosomal subunit protein uS5 (167 aa).

In terms of domain architecture, S5 DRBM spans 12-75 (LQEKLITVNR…EKARRNMVTI (64 aa)).

The protein belongs to the universal ribosomal protein uS5 family. As to quaternary structure, part of the 30S ribosomal subunit. Contacts proteins S4 and S8.

With S4 and S12 plays an important role in translational accuracy. Functionally, located at the back of the 30S subunit body where it stabilizes the conformation of the head with respect to the body. The chain is Small ribosomal subunit protein uS5 from Buchnera aphidicola subsp. Schizaphis graminum (strain Sg).